Reading from the N-terminus, the 917-residue chain is Calcium-activated chloride channel regulator 1 (917 aa).

The signal sequence occupies residues Met-1 to Ser-21. The segment at Asp-46–Gln-199 is metalloprotease domain. His-156 contributes to the Zn(2+) binding site. Glu-157 is a catalytic residue. Residues His-160 and Asn-167 each contribute to the Zn(2+) site. The 170-residue stretch at Ile-306 to Leu-475 folds into the VWFA domain. 6 N-linked (GlcNAc...) asparagine glycosylation sites follow: Asn-503, Asn-772, Asn-806, Asn-812, Asn-838, and Asn-893.

This sequence belongs to the CLCR family. Glycosylated. In terms of processing, the translation product is autoproteolytically cleaved by the metalloprotease domain in the endoplasmic reticulum into a N-terminal and a C-terminal products that remain physically associated with each other. The cleavage is necessary for calcium-activated chloride channel (CaCC) activation activity. As to expression, expressed in ileum, trachea, and the major salivary glands. In ileum, expressed to the crypt and villus epithelia, whereas in trachea expressed in both surface epithelium and submucosal glands.

The protein resides in the secreted. It is found in the extracellular space. Its function is as follows. May be involved in mediating calcium-activated chloride conductance. May play critical roles in goblet cell metaplasia, mucus hypersecretion, cystic fibrosis and AHR. May be involved in the regulation of mucus production and/or secretion by goblet cells. Involved in the regulation of tissue inflammation in the innate immune response. May play a role as a tumor suppressor. Induces MUC5AC. Induces a cAMP-dependent chloride conductance possibly through effects on CFTR in colon carcinoma cells. The sequence is that of Calcium-activated chloride channel regulator 1 (CLCA1) from Sus scrofa (Pig).